We begin with the raw amino-acid sequence, 314 residues long: Formimidoylglutamase (314 aa).

Positions 127, 151, 153, 155, 239, and 241 each coordinate Mn(2+).

It belongs to the arginase family. Requires Mn(2+) as cofactor.

The enzyme catalyses N-formimidoyl-L-glutamate + H2O = formamide + L-glutamate. Its pathway is amino-acid degradation; L-histidine degradation into L-glutamate; L-glutamate from N-formimidoyl-L-glutamate (hydrolase route): step 1/1. Catalyzes the conversion of N-formimidoyl-L-glutamate to L-glutamate and formamide. This is Formimidoylglutamase from Corynebacterium efficiens (strain DSM 44549 / YS-314 / AJ 12310 / JCM 11189 / NBRC 100395).